Here is a 132-residue protein sequence, read N- to C-terminus: MSMNDPLGDMLTRIRNAQMRGKSTVRTPGSKLRAWVLDVLKAEGYIRGYEEVTTEAGHKELEISLKYYEGTPVIRELARVSKPGRRVYAGAKELPQVRNGLGVSIVSTPKGVMSDAAARSANVGGEVLCTVF.

The protein belongs to the universal ribosomal protein uS8 family. In terms of assembly, part of the 30S ribosomal subunit. Contacts proteins S5 and S12.

Its function is as follows. One of the primary rRNA binding proteins, it binds directly to 16S rRNA central domain where it helps coordinate assembly of the platform of the 30S subunit. The chain is Small ribosomal subunit protein uS8 from Paracoccus denitrificans (strain Pd 1222).